Reading from the N-terminus, the 178-residue chain is PEST proteolytic signal-containing nuclear protein (178 aa).

A compositionally biased stretch (basic and acidic residues) spans 1–15; that stretch reads MADGKAGEEKPEKSQ. The segment at 1–84 is disordered; the sequence is MADGKAGEEK…IGSQTTKKAS (84 aa). The residue at position 2 (A2) is an N-acetylalanine. Residues 37 to 47 are compositionally biased toward low complexity; sequence SSSNGGESSSR. S53 carries the phosphoserine modification. N6-acetyllysine is present on K64. S77, S87, and S119 each carry phosphoserine. Residues 134 to 178 are disordered; it reads NIGRDTPTSAGPNSFNKGKHGFSDNQKLWERNIKSHLGNVHDQDN. T139 bears the Phosphothreonine mark. A compositionally biased stretch (polar residues) spans 139 to 149; that stretch reads TPTSAGPNSFN. S147 bears the Phosphoserine mark. N6-acetyllysine is present on residues K150 and K152. The span at 160–178 shows a compositional bias: basic and acidic residues; that stretch reads KLWERNIKSHLGNVHDQDN.

As to quaternary structure, interacts with UHRF2/NIRF. Ubiquitinated; mediated by UHRF2 and leading to its subsequent proteasomal degradation. In terms of processing, N-terminally acetylated in a HYPK-dependent manner by the NatA acetyltransferase complex which is composed of NAA10 and NAA15.

It localises to the nucleus. Its function is as follows. May be involved in cell cycle regulation. The protein is PEST proteolytic signal-containing nuclear protein (PCNP) of Pongo abelii (Sumatran orangutan).